A 734-amino-acid chain; its full sequence is DNA ligase (734 aa).

NAD(+) contacts are provided by residues 42-46 (DAEYD), 91-92 (SL), and E125. Residue K127 is the N6-AMP-lysine intermediate of the active site. NAD(+)-binding residues include R148, E185, K301, and K325. Residues C430, C433, C454, and C460 each contribute to the Zn(2+) site. A BRCT domain is found at 655 to 734 (SADSEVAGKT…DTWLQRVGKA (80 aa)).

Belongs to the NAD-dependent DNA ligase family. LigA subfamily. The cofactor is Mg(2+). It depends on Mn(2+) as a cofactor.

It carries out the reaction NAD(+) + (deoxyribonucleotide)n-3'-hydroxyl + 5'-phospho-(deoxyribonucleotide)m = (deoxyribonucleotide)n+m + AMP + beta-nicotinamide D-nucleotide.. Functionally, DNA ligase that catalyzes the formation of phosphodiester linkages between 5'-phosphoryl and 3'-hydroxyl groups in double-stranded DNA using NAD as a coenzyme and as the energy source for the reaction. It is essential for DNA replication and repair of damaged DNA. This is DNA ligase from Mesorhizobium japonicum (strain LMG 29417 / CECT 9101 / MAFF 303099) (Mesorhizobium loti (strain MAFF 303099)).